A 257-amino-acid chain; its full sequence is Ribonuclease PH (257 aa).

Residues R86 and 124 to 126 (GTR) contribute to the phosphate site.

The protein belongs to the RNase PH family. As to quaternary structure, homohexameric ring arranged as a trimer of dimers.

It catalyses the reaction tRNA(n+1) + phosphate = tRNA(n) + a ribonucleoside 5'-diphosphate. In terms of biological role, phosphorolytic 3'-5' exoribonuclease that plays an important role in tRNA 3'-end maturation. Removes nucleotide residues following the 3'-CCA terminus of tRNAs; can also add nucleotides to the ends of RNA molecules by using nucleoside diphosphates as substrates, but this may not be physiologically important. Probably plays a role in initiation of 16S rRNA degradation (leading to ribosome degradation) during starvation. This is Ribonuclease PH from Halalkalibacterium halodurans (strain ATCC BAA-125 / DSM 18197 / FERM 7344 / JCM 9153 / C-125) (Bacillus halodurans).